Consider the following 262-residue polypeptide: Phosphoribosylformylglycinamidine synthase subunit PurQ (262 aa).

Residues 2 to 238 enclose the Glutamine amidotransferase type-1 domain; it reads RIAVIQFPGT…FAWQLPRKHP (237 aa). Cysteine 87 serves as the catalytic Nucleophile. Residues histidine 223 and glutamate 225 contribute to the active site.

As to quaternary structure, part of the FGAM synthase complex composed of 1 PurL, 1 PurQ and 2 PurS subunits.

It is found in the cytoplasm. It catalyses the reaction N(2)-formyl-N(1)-(5-phospho-beta-D-ribosyl)glycinamide + L-glutamine + ATP + H2O = 2-formamido-N(1)-(5-O-phospho-beta-D-ribosyl)acetamidine + L-glutamate + ADP + phosphate + H(+). The enzyme catalyses L-glutamine + H2O = L-glutamate + NH4(+). The protein operates within purine metabolism; IMP biosynthesis via de novo pathway; 5-amino-1-(5-phospho-D-ribosyl)imidazole from N(2)-formyl-N(1)-(5-phospho-D-ribosyl)glycinamide: step 1/2. In terms of biological role, part of the phosphoribosylformylglycinamidine synthase complex involved in the purines biosynthetic pathway. Catalyzes the ATP-dependent conversion of formylglycinamide ribonucleotide (FGAR) and glutamine to yield formylglycinamidine ribonucleotide (FGAM) and glutamate. The FGAM synthase complex is composed of three subunits. PurQ produces an ammonia molecule by converting glutamine to glutamate. PurL transfers the ammonia molecule to FGAR to form FGAM in an ATP-dependent manner. PurS interacts with PurQ and PurL and is thought to assist in the transfer of the ammonia molecule from PurQ to PurL. The polypeptide is Phosphoribosylformylglycinamidine synthase subunit PurQ (Methanothrix thermoacetophila (strain DSM 6194 / JCM 14653 / NBRC 101360 / PT) (Methanosaeta thermophila)).